The following is a 199-amino-acid chain: Acireductone dioxygenase 1 (199 aa).

Residues His99, His101, Glu105, and His144 each coordinate Fe(2+). Positions 99, 101, 105, and 144 each coordinate Ni(2+).

It belongs to the acireductone dioxygenase (ARD) family. The cofactor is Fe(2+). Ni(2+) is required as a cofactor.

It localises to the cytoplasm. The protein localises to the nucleus. It catalyses the reaction 1,2-dihydroxy-5-(methylsulfanyl)pent-1-en-3-one + O2 = 4-methylsulfanyl-2-oxobutanoate + formate + 2 H(+). The enzyme catalyses 1,2-dihydroxy-5-(methylsulfanyl)pent-1-en-3-one + O2 = 3-(methylsulfanyl)propanoate + CO + formate + 2 H(+). Its pathway is amino-acid biosynthesis; L-methionine biosynthesis via salvage pathway; L-methionine from S-methyl-5-thio-alpha-D-ribose 1-phosphate: step 5/6. Its function is as follows. Catalyzes 2 different reactions between oxygen and the acireductone 1,2-dihydroxy-3-keto-5-methylthiopentene (DHK-MTPene) depending upon the metal bound in the active site. Fe-containing acireductone dioxygenase (Fe-ARD) produces formate and 2-keto-4-methylthiobutyrate (KMTB), the alpha-ketoacid precursor of methionine in the methionine recycle pathway. Ni-containing acireductone dioxygenase (Ni-ARD) produces methylthiopropionate, carbon monoxide and formate, and does not lie on the methionine recycle pathway. The polypeptide is Acireductone dioxygenase 1 (ARD1) (Oryza sativa subsp. indica (Rice)).